The primary structure comprises 168 residues: Protein GRE1 (168 aa).

The disordered stretch occupies residues 1–168 (MSNLLNKFAD…DDDSGNQGVW (168 aa)). Composition is skewed to basic and acidic residues over residues 8-20 (FADKLHGNDHDER) and 27-43 (DQTRQQRHEKHQQREFR). Composition is skewed to polar residues over residues 56–81 (NQGNFPQRQQPQSNLGGNTQFGGNDF) and 120–144 (TSGQQQKQGRTRGAQSNRYQSSNIG).

It localises to the cytoplasm. In Saccharomyces cerevisiae (strain ATCC 204508 / S288c) (Baker's yeast), this protein is Protein GRE1 (GRE1).